Here is a 321-residue protein sequence, read N- to C-terminus: Biotin synthase (321 aa).

A Radical SAM core domain is found at 45–274 (FHGNRVDLCS…GALIRLCGGR (230 aa)). 3 residues coordinate [4Fe-4S] cluster: C63, C67, and C70. Positions 139, 199, and 269 each coordinate [2Fe-2S] cluster.

It belongs to the radical SAM superfamily. Biotin synthase family. As to quaternary structure, homodimer. Requires [4Fe-4S] cluster as cofactor. The cofactor is [2Fe-2S] cluster.

The catalysed reaction is (4R,5S)-dethiobiotin + (sulfur carrier)-SH + 2 reduced [2Fe-2S]-[ferredoxin] + 2 S-adenosyl-L-methionine = (sulfur carrier)-H + biotin + 2 5'-deoxyadenosine + 2 L-methionine + 2 oxidized [2Fe-2S]-[ferredoxin]. The protein operates within cofactor biosynthesis; biotin biosynthesis; biotin from 7,8-diaminononanoate: step 2/2. In terms of biological role, catalyzes the conversion of dethiobiotin (DTB) to biotin by the insertion of a sulfur atom into dethiobiotin via a radical-based mechanism. The chain is Biotin synthase from Pelotomaculum thermopropionicum (strain DSM 13744 / JCM 10971 / SI).